A 141-amino-acid chain; its full sequence is Large ribosomal subunit protein uL11 (141 aa).

This sequence belongs to the universal ribosomal protein uL11 family. As to quaternary structure, part of the ribosomal stalk of the 50S ribosomal subunit. Interacts with L10 and the large rRNA to form the base of the stalk. L10 forms an elongated spine to which L12 dimers bind in a sequential fashion forming a multimeric L10(L12)X complex. In terms of processing, one or more lysine residues are methylated.

Forms part of the ribosomal stalk which helps the ribosome interact with GTP-bound translation factors. This is Large ribosomal subunit protein uL11 from Synechococcus sp. (strain ATCC 27144 / PCC 6301 / SAUG 1402/1) (Anacystis nidulans).